Reading from the N-terminus, the 478-residue chain is Alpha-1,3-mannosyl-glycoprotein 4-beta-N-acetylglucosaminyltransferase C (478 aa).

The Cytoplasmic portion of the chain corresponds to 1–23; the sequence is MFKFHQMKHIFEILDKMRCLRKR. The chain crosses the membrane as a helical; Signal-anchor for type II membrane protein span at residues 24 to 44; the sequence is STVSFLGVLVIFLLFMNLYIE. Residues 45–478 are Lumenal-facing; sequence DSYVLEGDKQ…IIRSISIWTS (434 aa). N-linked (GlcNAc...) asparagine glycosylation is found at asparagine 84 and asparagine 215.

This sequence belongs to the glycosyltransferase 54 family. The cofactor is a divalent metal cation.

It localises to the golgi apparatus membrane. The catalysed reaction is N(4)-{beta-D-GlcNAc-(1-&gt;2)-alpha-D-Man-(1-&gt;3)-[beta-D-GlcNAc-(1-&gt;2)-alpha-D-Man-(1-&gt;6)]-beta-D-Man-(1-&gt;4)-beta-D-GlcNAc-(1-&gt;4)-beta-D-GlcNAc}-L-asparaginyl-[protein] + UDP-N-acetyl-alpha-D-glucosamine = N(4)-{beta-D-GlcNAc-(1-&gt;2)-[beta-D-GlcNAc-(1-&gt;4)]-alpha-D-Man-(1-&gt;3)-[beta-D-GlcNAc-(1-&gt;2)-alpha-D-Man-(1-&gt;6)]-beta-D-Man-(1-&gt;4)-beta-D-GlcNAc-(1-&gt;4)-beta-D-GlcNAc}-L-asparaginyl-[protein] + UDP + H(+). Its pathway is protein modification; protein glycosylation. Functionally, glycosyltransferase that participates in the transfer of N-acetylglucosamine (GlcNAc) to the core mannose residues of N-linked glycans. Catalyzes the formation of the GlcNAcbeta1-4 branch on the GlcNAcbeta1-2Manalpha1-3 arm of the core structure of N-linked glycans. Essential for the production of tri- and tetra-antennary N-linked sugar chains. Does not catalyze the transfer of GlcNAc to the Manalpha1-6 arm to form GlcNAcBeta1-4Manalpha1-6 linkage ('GnT-VI' activity). The protein is Alpha-1,3-mannosyl-glycoprotein 4-beta-N-acetylglucosaminyltransferase C (MGAT4C) of Macaca fascicularis (Crab-eating macaque).